Consider the following 431-residue polypeptide: Glutamate-1-semialdehyde 2,1-aminomutase (431 aa).

Residue Lys269 is modified to N6-(pyridoxal phosphate)lysine.

It belongs to the class-III pyridoxal-phosphate-dependent aminotransferase family. HemL subfamily. In terms of assembly, homodimer. The cofactor is pyridoxal 5'-phosphate.

It is found in the cytoplasm. The enzyme catalyses (S)-4-amino-5-oxopentanoate = 5-aminolevulinate. It participates in porphyrin-containing compound metabolism; protoporphyrin-IX biosynthesis; 5-aminolevulinate from L-glutamyl-tRNA(Glu): step 2/2. The protein operates within porphyrin-containing compound metabolism; chlorophyll biosynthesis. The protein is Glutamate-1-semialdehyde 2,1-aminomutase of Chlorobaculum tepidum (strain ATCC 49652 / DSM 12025 / NBRC 103806 / TLS) (Chlorobium tepidum).